Consider the following 282-residue polypeptide: Probable endonuclease 4 (282 aa).

His71, His111, Glu147, Asp181, His184, His218, Asp231, His233, and Glu263 together coordinate Zn(2+).

The protein belongs to the AP endonuclease 2 family. Requires Zn(2+) as cofactor.

The catalysed reaction is Endonucleolytic cleavage to 5'-phosphooligonucleotide end-products.. In terms of biological role, endonuclease IV plays a role in DNA repair. It cleaves phosphodiester bonds at apurinic or apyrimidinic (AP) sites, generating a 3'-hydroxyl group and a 5'-terminal sugar phosphate. This chain is Probable endonuclease 4, found in Protochlamydia amoebophila (strain UWE25).